The primary structure comprises 124 residues: Small ribosomal subunit protein uS10z/uS10x (124 aa).

The protein belongs to the universal ribosomal protein uS10 family.

The chain is Small ribosomal subunit protein uS10z/uS10x (RPS20A) from Arabidopsis thaliana (Mouse-ear cress).